A 152-amino-acid chain; its full sequence is Interleukin-1 family member 10 (152 aa).

The protein belongs to the IL-1 family. In terms of assembly, interacts with cargo receptor TMED10; the interaction mediates the translocation from the cytoplasm into the ERGIC (endoplasmic reticulum-Golgi intermediate compartment) and thereby secretion.

Its subcellular location is the cytoplasm. The protein resides in the endoplasmic reticulum-Golgi intermediate compartment. The protein localises to the secreted. Functionally, cytokine with immunomodulatory activity. Alone, does not induce cytokine production, but reduces IL22 and IL17A production by T-cells in response to heat-killed Candida albicans. Reduces IL36G-induced production of IL8 by peripheral blood mononuclear cells. Increases IL6 production by dendritic cells stimulated by bacterial lipopolysaccharides (LPS). Ligand for IL-36R/IL1RL2. This chain is Interleukin-1 family member 10 (Il1f10), found in Mus musculus (Mouse).